The sequence spans 309 residues: uncharacterized protein (309 aa).

The tat-type signal signal peptide spans 1-32 (MTGTAPVSRRQYLGTAGAIIGTTAGCLTGADA).

Belongs to the bacterial solute-binding protein 1 family. WtpA subfamily. Post-translationally, predicted to be exported by the Tat system. The position of the signal peptide cleavage has not been experimentally proven.

This is an uncharacterized protein from Halobacterium salinarum (strain ATCC 700922 / JCM 11081 / NRC-1) (Halobacterium halobium).